A 219-amino-acid polypeptide reads, in one-letter code: Ribose-5-phosphate isomerase A (219 aa).

Residues 28–31 (TGST), 81–84 (DGAD), and 94–97 (KGGG) each bind substrate. The active-site Proton acceptor is the Glu-103. Lys-121 provides a ligand contact to substrate.

The protein belongs to the ribose 5-phosphate isomerase family. In terms of assembly, homodimer.

The catalysed reaction is aldehydo-D-ribose 5-phosphate = D-ribulose 5-phosphate. The protein operates within carbohydrate degradation; pentose phosphate pathway; D-ribose 5-phosphate from D-ribulose 5-phosphate (non-oxidative stage): step 1/1. Its function is as follows. Catalyzes the reversible conversion of ribose-5-phosphate to ribulose 5-phosphate. The chain is Ribose-5-phosphate isomerase A from Pectobacterium atrosepticum (strain SCRI 1043 / ATCC BAA-672) (Erwinia carotovora subsp. atroseptica).